The following is a 251-amino-acid chain: tRNA (guanine-N(7)-)-methyltransferase (251 aa).

Residues Gly72, 95–96, 132–133, and Leu152 each bind S-adenosyl-L-methionine; these read EI and NA. Asp155 is an active-site residue. 230-232 is a binding site for S-adenosyl-L-methionine; that stretch reads SEE.

It belongs to the class I-like SAM-binding methyltransferase superfamily. TrmB family.

It localises to the nucleus. It catalyses the reaction guanosine(46) in tRNA + S-adenosyl-L-methionine = N(7)-methylguanosine(46) in tRNA + S-adenosyl-L-homocysteine. It functions in the pathway tRNA modification; N(7)-methylguanine-tRNA biosynthesis. Catalyzes the formation of N(7)-methylguanine at position 46 (m7G46) in tRNA. This Drosophila willistoni (Fruit fly) protein is tRNA (guanine-N(7)-)-methyltransferase.